The sequence spans 105 residues: Large ribosomal subunit protein bL21 (105 aa).

The protein belongs to the bacterial ribosomal protein bL21 family. In terms of assembly, part of the 50S ribosomal subunit. Contacts protein L20.

Its function is as follows. This protein binds to 23S rRNA in the presence of protein L20. This is Large ribosomal subunit protein bL21 from Aliarcobacter butzleri (strain RM4018) (Arcobacter butzleri).